The sequence spans 126 residues: Methylglyoxal synthase (126 aa).

The 126-residue stretch at 1-126 (MADRKCLALI…AEQLIDFRRN (126 aa)) folds into the MGS-like domain. Residues His-12, Lys-16, 38 to 41 (TGTT), and 59 to 60 (SG) each bind substrate. Asp-65 serves as the catalytic Proton donor/acceptor. His-92 provides a ligand contact to substrate.

This sequence belongs to the methylglyoxal synthase family.

It carries out the reaction dihydroxyacetone phosphate = methylglyoxal + phosphate. Its function is as follows. Catalyzes the formation of methylglyoxal from dihydroxyacetone phosphate. This Rhizobium meliloti (strain 1021) (Ensifer meliloti) protein is Methylglyoxal synthase.